A 615-amino-acid polypeptide reads, in one-letter code: MPELRSRTSTHGRTMAGARALWRATGMTDDDFGKPIVAIANSFTQFVPGHVHLKDLGGLVADAVAEAGGVGREFNTIAVDDGIAMGHGGMLYSLPSRELIADAVEYMVNAHCADALVCISNCDKITPGMLLAALRLNIPTVFVSGGPMEAGKTVAIEGIVHSKIDLIDAMIAASNEAVTDDQLDQIERSACPTCGSCSGMFTANSMNCLTEAIGLALPGNGSTLATHAARRSLFVDAGRTVVEIAKRWYDGDDATVLPRAVANRAAFENAVALDVAMGGSTNTILHLLAAAREAELDFGVADIDTISRRVPCLAKVAPNSPLYHMEDVHRAGGIPAILGELDRAGLLNREVHAVHSPSLATWLADWDVRGDAATPEAVDLFHAAPGGVRTVEPFSTTNRWSTLDTDAAGGCVRDRAHAYTADGGLAILHGNLAPDGCVVKTAGVPEECLTFRGPARVYESQDDAVAAILAKEVTAGDVVVIRYEGPRGGPGMQEMLYPTSFLKGRGLGRACALLTDGRFSGGTSGLSIGHVSPEAAAGGLIALVEPGDEIVIDIPNRTIELAVPADVLDARRVAQEKRDRPYTPADRQRPVSAALRAYASMATSASDGAYRRVPE.

Asp-81 contacts Mg(2+). Cys-122 serves as a coordination point for [2Fe-2S] cluster. Asp-123 and Lys-124 together coordinate Mg(2+). Residue Lys-124 is modified to N6-carboxylysine. Cys-197 serves as a coordination point for [2Fe-2S] cluster. Glu-494 is a Mg(2+) binding site. The Proton acceptor role is filled by Ser-520.

The protein belongs to the IlvD/Edd family. Homodimer. The cofactor is [2Fe-2S] cluster. Mg(2+) is required as a cofactor.

It catalyses the reaction (2R)-2,3-dihydroxy-3-methylbutanoate = 3-methyl-2-oxobutanoate + H2O. The enzyme catalyses (2R,3R)-2,3-dihydroxy-3-methylpentanoate = (S)-3-methyl-2-oxopentanoate + H2O. Its pathway is amino-acid biosynthesis; L-isoleucine biosynthesis; L-isoleucine from 2-oxobutanoate: step 3/4. It functions in the pathway amino-acid biosynthesis; L-valine biosynthesis; L-valine from pyruvate: step 3/4. Functions in the biosynthesis of branched-chain amino acids. Catalyzes the dehydration of (2R,3R)-2,3-dihydroxy-3-methylpentanoate (2,3-dihydroxy-3-methylvalerate) into 2-oxo-3-methylpentanoate (2-oxo-3-methylvalerate) and of (2R)-2,3-dihydroxy-3-methylbutanoate (2,3-dihydroxyisovalerate) into 2-oxo-3-methylbutanoate (2-oxoisovalerate), the penultimate precursor to L-isoleucine and L-valine, respectively. This chain is Dihydroxy-acid dehydratase, found in Salinispora arenicola (strain CNS-205).